The following is a 257-amino-acid chain: MDRIIEKLESGWWIVSHEQKLWLPYGELPHGLAANFDLVGQRALRIGEWQGEPVWLVLQHRRHDMGSVRQVIDQDAGLFQLAGRGVQLAEFYRSHKFCGYCGHPMHPSKTEWAMLCSHCRDRYYPQIAPCIIVAIRREDSILLARHVRHRNGVHTVLAGFVEVGETLEQAVAREVMEESGIKVKNLRYVTSQPWPFPQSLMTAFMAEYDSGEIVIDPKELLEANWYRYDDLPLLPPPGTVARRLIEDTVAMCRAEYD.

Arg69 provides a ligand contact to substrate. Zn(2+)-binding residues include Cys98 and Cys101. Position 111 (Glu111) interacts with substrate. Zn(2+) contacts are provided by Cys116 and Cys119. Position 124 (Tyr124) interacts with substrate. In terms of domain architecture, Nudix hydrolase spans 125–248 (PQIAPCIIVA…TVARRLIEDT (124 aa)). Residues Ala158, Glu174, and Glu178 each coordinate a divalent metal cation. Positions 159–180 (GFVEVGETLEQAVAREVMEESG) match the Nudix box motif. Residue 192–199 (QPWPFPQS) participates in substrate binding. Residue Glu219 coordinates a divalent metal cation. A substrate-binding site is contributed by Ala241.

This sequence belongs to the Nudix hydrolase family. NudC subfamily. As to quaternary structure, homodimer. Mg(2+) serves as cofactor. Requires Mn(2+) as cofactor. It depends on Zn(2+) as a cofactor.

It catalyses the reaction a 5'-end NAD(+)-phospho-ribonucleoside in mRNA + H2O = a 5'-end phospho-adenosine-phospho-ribonucleoside in mRNA + beta-nicotinamide D-ribonucleotide + 2 H(+). The catalysed reaction is NAD(+) + H2O = beta-nicotinamide D-ribonucleotide + AMP + 2 H(+). It carries out the reaction NADH + H2O = reduced beta-nicotinamide D-ribonucleotide + AMP + 2 H(+). MRNA decapping enzyme that specifically removes the nicotinamide adenine dinucleotide (NAD) cap from a subset of mRNAs by hydrolyzing the diphosphate linkage to produce nicotinamide mononucleotide (NMN) and 5' monophosphate mRNA. The NAD-cap is present at the 5'-end of some mRNAs and stabilizes RNA against 5'-processing. Has preference for mRNAs with a 5'-end purine. Catalyzes the hydrolysis of a broad range of dinucleotide pyrophosphates. The polypeptide is NAD-capped RNA hydrolase NudC (Salmonella typhi).